We begin with the raw amino-acid sequence, 282 residues long: Probable endonuclease LCL3 (282 aa).

Residues 55-71 (SNLIPTVLLTSGILFAV) form a helical membrane-spanning segment. The TNase-like domain maps to 95-256 (RSILGKVTSV…KKKGKGLWKA (162 aa)). The active site involves Arg144. Asp149 contacts Ca(2+). Catalysis depends on residues Glu152 and Arg192.

It belongs to the LCL3 family.

It localises to the mitochondrion. The protein resides in the membrane. The chain is Probable endonuclease LCL3 (LCL3) from Arthroderma otae (strain ATCC MYA-4605 / CBS 113480) (Microsporum canis).